Reading from the N-terminus, the 651-residue chain is Intraflagellar transport protein 70A (651 aa).

TPR repeat units follow at residues 8–41, 42–75, 140–173, 175–207, 372–405, 410–443, and 445–478; these read DGEY…QYRS, RAGL…SPEV, PESE…MGYK, DLSF…GIRE, LTEQ…YDET, IPVL…CNEH, and IWKL…HYDN. Residues 494–521 adopt a coiled-coil conformation; that stretch reads YIMTSQNEEAEELMRKIEKEEEQIAYEN. A TPR 8 repeat occupies 530–563; the sequence is CIVNLVIGTLYCAKGNYEFGISRVIKSLEPYNKK.

This sequence belongs to the TTC30/dfy-1/fleer family.

Its subcellular location is the cell projection. It is found in the cilium. Functionally, required for polyglutamylation of axonemal tubulin. Plays a role in anterograde intraflagellar transport (IFT), the process by which cilia precursors are transported from the base of the cilium to the site of their incorporation at the tip. This is Intraflagellar transport protein 70A (ift70a) from Xenopus laevis (African clawed frog).